The primary structure comprises 566 residues: Chondroitin sulfate proteoglycan 5 (566 aa).

Residues 1-30 form the signal peptide; sequence MGRAGGGGPDWGPPPVLLLLGVTLVLTAGA. Over 31–423 the chain is Extracellular; the sequence is VPARETGSAI…SIITDFQVMC (393 aa). The O-linked (Xyl...) (chondroitin sulfate) serine glycan is linked to Ser38. The tract at residues 56-93 is disordered; that stretch reads ANDTREEAGLPAAGEDETSWTERGSEMAAVGPGVGPEE. An N-linked (GlcNAc...) asparagine glycan is attached at Asn57. O-linked (GalNAc...) threonine glycosylation occurs at Thr76. The O-linked (Xyl...) (chondroitin sulfate) serine glycan is linked to Ser123. A glycan (O-linked (GalNAc...) threonine) is linked at Thr132. Disordered regions lie at residues 137–173, 218–249, and 263–327; these read DEAL…GPEL, DSEG…TPSW, and ESDF…PPQH. Residue Ser143 is glycosylated (O-linked (GalNAc...) serine). Residues Thr144, Thr153, and Thr155 are each glycosylated (O-linked (GalNAc...) threonine). 2 O-linked (GalNAc...) serine glycosylation sites follow: Ser156 and Ser160. Basic and acidic residues predominate over residues 163–173; sequence VHDKPSVGPEL. Thr235 is a glycosylation site (O-linked (GalNAc...) threonine). The interval 265 to 301 is interaction with TNC and TNR; sequence DFYPTTSFYDDLEEEEEEEEDKDTVGGGDLEDENDLL. Residues 274–286 are compositionally biased toward acidic residues; the sequence is DDLEEEEEEEEDK. N-linked (GlcNAc...) asparagine glycans are attached at residues Asn355 and Asn367. The EGF-like domain occupies 371–413; the sequence is RSVCDLFPSYCHNGGQCYLVENIGAFCRCNTQDYIWHKGMRCE. Disulfide bonds link Cys374/Cys387, Cys381/Cys397, and Cys399/Cys412. A phosphoserine mark is found at Gly394 and Phe396. Cys397 carries the post-translational modification Phosphothreonine. A helical membrane pass occupies residues 424-444; the sequence is VAVGSAALVLLLLFMMTVFFA. The segment at 442–460 is interaction with GOPC; the sequence is FFAKKLYLLKTENTKLRRT. At 445–566 the chain is on the cytoplasmic side; it reads KKLYLLKTEN…GVNCLQNNLT (122 aa). Ser467, Ser475, and Ser477 each carry phosphoserine. At Thr478 the chain carries Phosphothreonine. 2 positions are modified to phosphoserine: Ser483 and Ser543. The tract at residues 531–566 is disordered; that stretch reads KEEESFNIQNSMSPKLEGGKGDQDDLGVNCLQNNLT.

Binds TNR and probably TNC. Interacts with ERBB3 and GOPC. Interacts with MDK; this interaction is independent of the presence of chondroitin sulfate chains and promotes elongation of oligodendroglial precursor-like cells. In terms of processing, N-glycosylated. Post-translationally, O-glycosylated; contains chondroitin sulfate glycans. Part-time proteoglycan, expressed in part as a proteoglycan exhibiting chondroitin sulfate glycans and in part as a non-proteoglycan form. The relative amount of both forms depends on tissues and tissue maturation. In the cerebellum the 2 forms coexist while in the cerebrum the proteoglycan form is predominant. Phosphorylated; in intracellular and extracellular parts. In terms of tissue distribution, expressed in olfactory bulb, hippocampus, brain stem, spinal cord, cerebrum and cerebellum. Expressed by Purkinje cells in the cerebellum (at protein level). Expressed in immature and mature cerebellum (isoform 1, isoform 2 and isoform 3).

It localises to the cell membrane. The protein localises to the synaptic cell membrane. The protein resides in the endoplasmic reticulum membrane. It is found in the golgi apparatus membrane. Its subcellular location is the cell surface. It localises to the secreted. Functionally, may function as a growth and differentiation factor involved in neuritogenesis. May induce ERBB3 activation. The polypeptide is Chondroitin sulfate proteoglycan 5 (Cspg5) (Mus musculus (Mouse)).